Here is a 188-residue protein sequence, read N- to C-terminus: MSIKSDKWIRYMAQAHGIIEPFEPRQIREANNARIISYGTSSYGYDIRCSNEFKIFTNINSAVVDPKNFDASSFVDVQSDVCIIPPNSFALARTVEYFRIPRSVLTICLGKSTYARCGIIVNITPLEPEWEGHVTLEFSNTTPLPAKVYANEGVAQVVFFESDELCETSYRDRSGKYQGQTGVTLPKA.

Residues lysine 111–arginine 116, threonine 135–glutamate 137, glutamine 156, tyrosine 170, and glutamine 180 contribute to the dCTP site. Catalysis depends on glutamate 137, which acts as the Proton donor/acceptor.

This sequence belongs to the dCTP deaminase family. Homotrimer.

It catalyses the reaction dCTP + H2O + H(+) = dUTP + NH4(+). Its pathway is pyrimidine metabolism; dUMP biosynthesis; dUMP from dCTP (dUTP route): step 1/2. In terms of biological role, catalyzes the deamination of dCTP to dUTP. In Nitrosococcus oceani (strain ATCC 19707 / BCRC 17464 / JCM 30415 / NCIMB 11848 / C-107), this protein is dCTP deaminase.